Reading from the N-terminus, the 131-residue chain is Arsenate reductase 2 (131 aa).

Catalysis depends on nucleophile residues Cys10, Cys82, and Cys89. Disulfide bonds link Cys10–Cys82 and Cys82–Cys89.

The protein belongs to the low molecular weight phosphotyrosine protein phosphatase family. Thioredoxin-coupled ArsC subfamily.

It localises to the cytoplasm. It carries out the reaction arsenate + [thioredoxin]-dithiol + H(+) = arsenite + [thioredoxin]-disulfide + H2O. Functionally, catalyzes the reduction of arsenate [As(V)] to arsenite [As(III)]. This Staphylococcus saprophyticus subsp. saprophyticus (strain ATCC 15305 / DSM 20229 / NCIMB 8711 / NCTC 7292 / S-41) protein is Arsenate reductase 2.